The following is a 155-amino-acid chain: FUN14 domain-containing protein 1 (155 aa).

Residues 1-47 lie on the Cytoplasmic side of the membrane; sequence MASRNPPPQDYESDDESYEVLDLTEYARRHHWWNRVFGHSSGPMVEK. Phosphoserine is present on residues Ser13 and Ser17. A Phosphotyrosine; by SRC modification is found at Tyr18. Positions 18–21 match the YXXL motif; the sequence is YEVL. Residues 48 to 68 traverse the membrane as a helical segment; that stretch reads YSVATQIVMGGVTGWCAGFLF. Over 69–74 the chain is Mitochondrial intermembrane; that stretch reads QKVGKL. Residues 75–95 traverse the membrane as a helical segment; sequence AATAVGGGFLLLQVASHSGYV. At 96–133 the chain is on the cytoplasmic side; it reads QIDWKRVEKDVNKAKRQIKKRANKAAPEINNIIEEATD. Lys119 is covalently cross-linked (Glycyl lysine isopeptide (Lys-Gly) (interchain with G-Cter in ubiquitin)). Residues 134–154 form a helical membrane-spanning segment; sequence FIKQNIVISSGFVGGFLLGLA. Position 155 (Ser155) is a topological domain, mitochondrial intermembrane.

Belongs to the FUN14 family. As to quaternary structure, interacts (via YXXL motif) with MAP1 LC3 family proteins MAP1LC3A, MAP1LC3B and GABARAP. Interacts with DNM1L/DPR1. Interacts with GPX4. Phosphorylation at Ser-13 by CK2 and at Tyr-18 by SRC inhibits activation of mitophagy. Following hypoxia, dephosphorylated at Tyr-18, leading to interaction with MAP1 LC3 family proteins and triggering mitophagy. Dephosphorylation is mediated by PGAM5. Phosphorylated by ULK1 at Ser-17 which enhances FUNDC1 binding to LC3. In terms of processing, ubiquitinated on Lys-119. Deubiquitinated by USP19; leading to hypoxia-induced DRP1 oligomerization and GTPase activity.

The protein localises to the mitochondrion outer membrane. Integral mitochondrial outer-membrane protein that mediates the formation of mitochondria-associated endoplasmic reticulum membranes (MAMs). In turn, mediates angiogenesis and neoangiogenesis through interference with intracellular Ca(2+) communication and regulation of the vascular endothelial growth factor receptor KDR/VEGFR2 expression at both mRNA and protein levels. Also acts as an activator of hypoxia-induced mitophagy, an important mechanism for mitochondrial quality and homeostasis, by interacting with and recruiting LC3 protein family to mitochondria. Mechanistically, recruits DRP1 at ER-mitochondria contact sites leading to DRP1 oligomerization and GTPase activity to facilitate mitochondrial fission during hypoxia. Additionally, plays a role in hepatic ferroptosis by interacting directly with glutathione peroxidase/GPX4 to facilitate its recruitment into mitochondria through TOM/TIM complex where it is degraded by mitophagy. The polypeptide is FUN14 domain-containing protein 1 (Fundc1) (Mus musculus (Mouse)).